Consider the following 282-residue polypeptide: MESFKYCFDNDGKKWIIGNTLYSGNSILYKVRKNFTSSFYNYVMKIDHKSHKPLLSEIRFYISVLDPLTINNWTRERGIKYLAIPDLYGIGETDDYMFFIIKNLGRVFAPKDSESVFEACVTMINTLEFIHSQGFTHGKIEPMNILIRNKRISLIDYSRTNKLYKSGTHIDYNEDMITSGNINYMCVDNHLGATVSRRGDLEMLGYCMIEWFGGKLPWKNESSIKVIKQKKEYKQFIATFFEDCFPEGNEPLELVRYIELVYMLDYSQTPNYDRLRRLFIQD.

Residues methionine 1 and lysine 30 each contribute to the ATP site. A Protein kinase domain is found at 1–282 (MESFKYCFDN…DRLRRLFIQD (282 aa)).

This sequence belongs to the protein kinase superfamily. Ser/Thr protein kinase family. Poxviruses subfamily. As to quaternary structure, interacts with B1/VPK1. Interacts with host VRK1. Interacts with host VRK2.

The protein localises to the host nucleus. Its activity is regulated as follows. Both catalytically active kinases B1/VPK1 and host VRK2 repress B12 inhibitory activity in a B1/VPK1 deletion mutant strain. Functionally, pseudokinase that plays a role in viral DNA replication repression by activating the antiviral protein BANF1 and inhibiting the activity of host VRK1, a cellular modulator of BANF1. This Cynomys gunnisoni (Gunnison's prairie dog) protein is Pseudokinase OPG198 (OPG198).